The primary structure comprises 621 residues: Putative DNA 3'-5' helicase Rad25 (621 aa).

In terms of domain architecture, Helicase ATP-binding spans 268-417 (VERFTEQGSG…EIFTLIGPPI (150 aa)). 281-288 (GPPGSGKT) lines the ATP pocket. Positions 371 to 374 (DEVH) match the DEAH box motif. The disordered stretch occupies residues 441–465 (PWGDETEQSEYSSTSGHDRRQAAAS). Positions 469-621 (KIDEIRYALA…EAVEPPAKTE (153 aa)) constitute a Helicase C-terminal domain.

It belongs to the helicase family. RAD25/XPB subfamily.

The enzyme catalyses Couples ATP hydrolysis with the unwinding of duplex DNA by translocating in the 3'-5' direction.. The catalysed reaction is ATP + H2O = ADP + phosphate + H(+). This chain is Putative DNA 3'-5' helicase Rad25, found in Haloarcula marismortui (strain ATCC 43049 / DSM 3752 / JCM 8966 / VKM B-1809) (Halobacterium marismortui).